Here is a 355-residue protein sequence, read N- to C-terminus: UDP-N-acetylglucosamine--N-acetylmuramyl-(pentapeptide) pyrophosphoryl-undecaprenol N-acetylglucosamine transferase (355 aa).

Residues 7-9, N119, R159, S187, I241, and Q286 contribute to the UDP-N-acetyl-alpha-D-glucosamine site; that span reads TGG.

This sequence belongs to the glycosyltransferase 28 family. MurG subfamily.

It is found in the cell inner membrane. The catalysed reaction is di-trans,octa-cis-undecaprenyl diphospho-N-acetyl-alpha-D-muramoyl-L-alanyl-D-glutamyl-meso-2,6-diaminopimeloyl-D-alanyl-D-alanine + UDP-N-acetyl-alpha-D-glucosamine = di-trans,octa-cis-undecaprenyl diphospho-[N-acetyl-alpha-D-glucosaminyl-(1-&gt;4)]-N-acetyl-alpha-D-muramoyl-L-alanyl-D-glutamyl-meso-2,6-diaminopimeloyl-D-alanyl-D-alanine + UDP + H(+). The protein operates within cell wall biogenesis; peptidoglycan biosynthesis. Its function is as follows. Cell wall formation. Catalyzes the transfer of a GlcNAc subunit on undecaprenyl-pyrophosphoryl-MurNAc-pentapeptide (lipid intermediate I) to form undecaprenyl-pyrophosphoryl-MurNAc-(pentapeptide)GlcNAc (lipid intermediate II). The polypeptide is UDP-N-acetylglucosamine--N-acetylmuramyl-(pentapeptide) pyrophosphoryl-undecaprenol N-acetylglucosamine transferase (Nitrosomonas eutropha (strain DSM 101675 / C91 / Nm57)).